We begin with the raw amino-acid sequence, 478 residues long: Serine hydroxymethyltransferase (478 aa).

Residues leucine 161 and 165-167 (GHL) each bind (6S)-5,6,7,8-tetrahydrofolate. At lysine 273 the chain carries N6-(pyridoxal phosphate)lysine. A (6S)-5,6,7,8-tetrahydrofolate-binding site is contributed by glutamate 291.

The protein belongs to the SHMT family. As to quaternary structure, homodimer. Requires pyridoxal 5'-phosphate as cofactor.

The protein localises to the cytoplasm. It carries out the reaction (6R)-5,10-methylene-5,6,7,8-tetrahydrofolate + glycine + H2O = (6S)-5,6,7,8-tetrahydrofolate + L-serine. It participates in one-carbon metabolism; tetrahydrofolate interconversion. Its pathway is amino-acid biosynthesis; glycine biosynthesis; glycine from L-serine: step 1/1. Its function is as follows. Catalyzes the reversible interconversion of serine and glycine with tetrahydrofolate (THF) serving as the one-carbon carrier. This reaction serves as the major source of one-carbon groups required for the biosynthesis of purines, thymidylate, methionine, and other important biomolecules. Also exhibits THF-independent aldolase activity toward beta-hydroxyamino acids, producing glycine and aldehydes, via a retro-aldol mechanism. In Salinispora tropica (strain ATCC BAA-916 / DSM 44818 / JCM 13857 / NBRC 105044 / CNB-440), this protein is Serine hydroxymethyltransferase.